The primary structure comprises 358 residues: UDP-N-acetylglucosamine--N-acetylmuramyl-(pentapeptide) pyrophosphoryl-undecaprenol N-acetylglucosamine transferase (358 aa).

UDP-N-acetyl-alpha-D-glucosamine contacts are provided by residues 10-12 (TGG), Asn-124, Arg-165, Ser-191, Ile-246, and Gln-291.

This sequence belongs to the glycosyltransferase 28 family. MurG subfamily.

The protein resides in the cell inner membrane. The enzyme catalyses di-trans,octa-cis-undecaprenyl diphospho-N-acetyl-alpha-D-muramoyl-L-alanyl-D-glutamyl-meso-2,6-diaminopimeloyl-D-alanyl-D-alanine + UDP-N-acetyl-alpha-D-glucosamine = di-trans,octa-cis-undecaprenyl diphospho-[N-acetyl-alpha-D-glucosaminyl-(1-&gt;4)]-N-acetyl-alpha-D-muramoyl-L-alanyl-D-glutamyl-meso-2,6-diaminopimeloyl-D-alanyl-D-alanine + UDP + H(+). The protein operates within cell wall biogenesis; peptidoglycan biosynthesis. Functionally, cell wall formation. Catalyzes the transfer of a GlcNAc subunit on undecaprenyl-pyrophosphoryl-MurNAc-pentapeptide (lipid intermediate I) to form undecaprenyl-pyrophosphoryl-MurNAc-(pentapeptide)GlcNAc (lipid intermediate II). This chain is UDP-N-acetylglucosamine--N-acetylmuramyl-(pentapeptide) pyrophosphoryl-undecaprenol N-acetylglucosamine transferase, found in Citrifermentans bemidjiense (strain ATCC BAA-1014 / DSM 16622 / JCM 12645 / Bem) (Geobacter bemidjiensis).